The following is a 57-amino-acid chain: Large ribosomal subunit protein bL32 (57 aa).

Positions 1 to 20 are enriched in basic residues; it reads MAVPKKKTSKGKRNQRHAVW. Residues 1–23 form a disordered region; sequence MAVPKKKTSKGKRNQRHAVWKAK.

This sequence belongs to the bacterial ribosomal protein bL32 family.

The chain is Large ribosomal subunit protein bL32 from Prochlorococcus marinus (strain SARG / CCMP1375 / SS120).